We begin with the raw amino-acid sequence, 127 residues long: Small ribosomal subunit protein eS8 (127 aa).

The interval 1–31 (MTIFQGKSGKKATGGSLKQSRKKRRFELGRE) is disordered.

It belongs to the eukaryotic ribosomal protein eS8 family. Part of the 30S ribosomal subunit.

This Thermoplasma acidophilum (strain ATCC 25905 / DSM 1728 / JCM 9062 / NBRC 15155 / AMRC-C165) protein is Small ribosomal subunit protein eS8 (rps8e).